The primary structure comprises 916 residues: Major intrinsically disordered Notch2-binding receptor 1 (916 aa).

Residues 1-891 (METSQETSLF…AEFRRAKVCK (891 aa)) lie on the Cytoplasmic side of the membrane. 5 disordered regions span residues 390-409 (EEKL…PAPE), 553-591 (KSDC…SEEE), 648-675 (SLTS…GPKL), 705-726 (TRPS…IASI), and 745-782 (NEEE…LPKQ). Basic and acidic residues-rich tracts occupy residues 553 to 564 (KSDCDSSPEHNL) and 575 to 591 (KGDK…SEEE). Phosphoserine is present on Ser711. A compositionally biased stretch (basic and acidic residues) spans 750 to 771 (KDTGPGDNKDWHRKSKEADRQY). The helical transmembrane segment at 892–912 (IAALIAAAACTVILVIVVPIC) threads the bilayer. Residues 913–916 (TMKS) are Extracellular-facing.

Belongs to the MINAR family. In terms of assembly, interacts with NOTCH2; this interaction increases MINAR1 stability. Interacts (via N-terminus) with DEPTOR (via PDZ domain); this interaction may stabilize DEPTOR protein by impairing its ubiquitination. As to expression, widely expressed, including in breast epithelial cells and endothelial cells (at protein level). Expression is down-regulated in advanced breast tumors (at protein level).

The protein localises to the cell membrane. Intrinsically disordered protein which may negatively regulate mTOR signaling pathway by stabilizing the mTOR complex component DEPTOR. Negatively regulates angiogenesis. Negatively regulates cell growth. Negatively regulates neurite outgrowth in hippocampal neurons. The chain is Major intrinsically disordered Notch2-binding receptor 1 from Homo sapiens (Human).